The following is a 451-amino-acid chain: Probable NADH dehydrogenase (451 aa).

Residue 41–71 (KLIILGCGWGSYSFLKNLNSIKYDITVISPR) participates in FAD binding. 199-236 (LSFVIVGGGATGIEFTSELNDFFSEDLSRLFPFVPVNE) lines the NAD(+) pocket.

This sequence belongs to the NADH dehydrogenase family. The cofactor is FAD.

The enzyme catalyses a ubiquinone + NADH + 5 H(+)(in) = a ubiquinol + NAD(+) + 4 H(+)(out). The protein is Probable NADH dehydrogenase of Dictyostelium discoideum (Social amoeba).